The following is a 384-amino-acid chain: Glycerol 3-phosphate oxidase (384 aa).

The first 17 residues, 1–17 (MQTIDVLIVGGGVIGTS), serve as a signal peptide directing secretion. Residue Ile14 coordinates FAD. Cys18 is lipidated: N-palmitoyl cysteine. The S-diacylglycerol cysteine moiety is linked to residue Cys18. Residues Glu33, 42 to 43 (TS), and 47 to 49 (SGV) each bind FAD. 2 residues coordinate sn-glycerol 3-phosphate: Ser47 and His51. His51 serves as the catalytic Proton acceptor. Val177 serves as a coordination point for FAD. Positions 258 and 320 each coordinate sn-glycerol 3-phosphate. 346-347 (MK) is an FAD binding site. A sn-glycerol 3-phosphate-binding site is contributed by Ser348. Residue Thr352 coordinates FAD.

As to quaternary structure, monomer. FAD serves as cofactor.

It localises to the cytoplasm. The protein localises to the cell membrane. It catalyses the reaction sn-glycerol 3-phosphate + O2 = dihydroxyacetone phosphate + H2O2. Its pathway is polyol metabolism; glycerol degradation via glycerol kinase pathway; glycerone phosphate from sn-glycerol 3-phosphate (aerobic route): step 1/1. In terms of biological role, catalyzes the oxidation of glycerol 3-phosphate to dihydroxyacetone phosphate (DHAP), with a reduction of O2 to H2O2. The formation of hydrogen peroxide by this enzyme is crucial for cytotoxic effects on host cells. Does not show any dehydrogenase activity with NAD(+). The chain is Glycerol 3-phosphate oxidase from Mycoplasma genitalium (strain ATCC 33530 / DSM 19775 / NCTC 10195 / G37) (Mycoplasmoides genitalium).